A 169-amino-acid polypeptide reads, in one-letter code: Probable inosine/xanthosine triphosphatase (169 aa).

Substrate is bound at residue 7–12; the sequence is STNKAK. Mg(2+) is bound at residue Glu35.

The protein belongs to the YjjX NTPase family. In terms of assembly, homodimer. It depends on Mg(2+) as a cofactor. The cofactor is Mn(2+).

The catalysed reaction is XTP + H2O = XDP + phosphate + H(+). It carries out the reaction ITP + H2O = IDP + phosphate + H(+). Functionally, phosphatase that hydrolyzes non-canonical purine nucleotides such as XTP and ITP to their respective diphosphate derivatives. Probably excludes non-canonical purines from DNA/RNA precursor pool, thus preventing their incorporation into DNA/RNA and avoiding chromosomal lesions. The sequence is that of Probable inosine/xanthosine triphosphatase from Sulfurisphaera tokodaii (strain DSM 16993 / JCM 10545 / NBRC 100140 / 7) (Sulfolobus tokodaii).